A 478-amino-acid polypeptide reads, in one-letter code: ATP-dependent RNA helicase DDX19A (478 aa).

At Ala2 the chain carries N-acetylalanine. The interval Ala2–Glu299 is N-terminal lobe. Lys26 is covalently cross-linked (Glycyl lysine isopeptide (Lys-Gly) (interchain with G-Cter in SUMO1); alternate). Lys26 is covalently cross-linked (Glycyl lysine isopeptide (Lys-Gly) (interchain with G-Cter in SUMO2); alternate). The interval Lys31–Arg55 is disordered. Residues Asp54 to Ser67 are N-terminal helix. Positions Lys91–Glu119 match the Q motif motif. Residues Gln118 and Ser137–Thr144 each bind ATP. In terms of domain architecture, Helicase ATP-binding spans Met124–Ile294. A DEAD box motif is present at residues Asp241–Asp244. Positions Glu300–Asn478 are C-terminal lobe. The region spanning Thr305–Ile473 is the Helicase C-terminal domain. Positions 428 and 431 each coordinate ATP.

The protein belongs to the DEAD box helicase family. DDX19/DBP5 subfamily.

The protein localises to the cytoplasm. The protein resides in the nucleus. Its subcellular location is the nucleoplasm. It carries out the reaction ATP + H2O = ADP + phosphate + H(+). Its function is as follows. ATP-dependent RNA helicase involved in mRNA export from the nucleus. Rather than unwinding RNA duplexes, DDX19 functions as a remodeler of ribonucleoprotein particles, whereby proteins bound to nuclear mRNA are dissociated and replaced by cytoplasmic mRNA binding proteins. In Bos taurus (Bovine), this protein is ATP-dependent RNA helicase DDX19A (DDX19A).